The sequence spans 271 residues: High mobility group protein homolog TDP-1 (271 aa).

Positions 8 to 63 (GPLPTDIEETVITIMREEGVRYITAKILRMRLESKYQMEFGPHKAAIDDIVARAMQ) constitute a DEK-C domain. Positions 75–118 (LKEKDASKSSGGKGSKRARSAGAEAPSKTKKEMTEKPKKPADYP) are disordered. The segment covering 101–116 (SKTKKEMTEKPKKPAD) has biased composition (basic and acidic residues). DNA-binding regions (HMG box) lie at residues 118–186 (PKPA…DEYK) and 206–270 (PKRA…AALP).

Its subcellular location is the nucleus. In terms of biological role, unknown. May play a role in transcription and/or DNA replication. It is not known whether this protein is DNA sequence binding-specific or not. The protein is High mobility group protein homolog TDP-1 of Trypanosoma brucei rhodesiense.